Consider the following 316-residue polypeptide: Serpentine receptor class gamma-8 (316 aa).

Transmembrane regions (helical) follow at residues 28–48 (FVQV…LYVV), 60–80 (PFFM…IFIT), 106–126 (LYYP…IFLT), 147–167 (FSRI…NTII), 186–206 (IIPW…VVMI), 235–255 (ACAA…MKVL), and 267–287 (LVQP…MIFA).

The protein belongs to the nematode receptor-like protein srg family.

Its subcellular location is the membrane. This Caenorhabditis elegans protein is Serpentine receptor class gamma-8 (srg-8).